The sequence spans 175 residues: Translation initiation factor IF-3 (175 aa).

It belongs to the IF-3 family. Monomer.

Its subcellular location is the cytoplasm. Its function is as follows. IF-3 binds to the 30S ribosomal subunit and shifts the equilibrium between 70S ribosomes and their 50S and 30S subunits in favor of the free subunits, thus enhancing the availability of 30S subunits on which protein synthesis initiation begins. This is Translation initiation factor IF-3 from Staphylococcus epidermidis (strain ATCC 35984 / DSM 28319 / BCRC 17069 / CCUG 31568 / BM 3577 / RP62A).